Here is a 1480-residue protein sequence, read N- to C-terminus: Cystic fibrosis transmembrane conductance regulator (1480 aa).

At 1–77 (MQRSPLEKAS…KLINALRRCF (77 aa)) the chain is on the cytoplasmic side. The helical transmembrane segment at 78–98 (FWRFMFYGILLYLGEVTKAVQ) threads the bilayer. Residues 81-365 (FMFYGILLYL…WAVQTWYDSL (285 aa)) form the ABC transmembrane type-1 1 domain. The Extracellular segment spans residues 99-122 (PLLLGRIIASYDPDNKTERSIAIY). A helical transmembrane segment spans residues 123 to 146 (LGIGLCLLFIVRTLLLHPAIFGLH). Over 147–195 (HIGMQMRIAMFSLIYKKTLKLSSRVLDKISIGQLVSLLSNNLNKFDEGL) the chain is Cytoplasmic. The helical transmembrane segment at 196 to 216 (ALAHFVWIAPLQVALLMGLIW) threads the bilayer. The Extracellular segment spans residues 217–222 (ELLQAS). The chain crosses the membrane as a helical span at residues 223 to 243 (AFCGLGFLIVLALFQAGLGRM). The Cytoplasmic portion of the chain corresponds to 244–298 (MMKYRDQRAGKINERLVITSEMIENIQSVKAYCWEEAMEKMIENLRQTELKLTRK). A helical membrane pass occupies residues 299–319 (AAYVRYFNSSAFFFSGFFVVF). The Extracellular portion of the chain corresponds to 320–339 (LSVLPYALIKGIVLRKIFTT). A helical transmembrane segment spans residues 340–358 (ISFCIVLRMAVTRQFPWAV). The Cytoplasmic segment spans residues 359 to 858 (QTWYDSLGAI…YLRYITLHKS (500 aa)). ATP is bound by residues Trp401, Ser434, 458 to 465 (GSTGAGKT), and Gln493. The region spanning 423–646 (NGDDNLFFSN…RPDFSSKLMG (224 aa)) is the ABC transporter 1 domain. Cys524 carries the S-palmitoyl cysteine lipid modification. 2 positions are modified to phosphoserine: Ser549 and Ser660. The tract at residues 654–831 (SSERRNSILT…EEINEEDLKE (178 aa)) is disordered R region. Ser670 bears the Phosphoserine; by PKA mark. Ser686 is subject to Phosphoserine. Lys688 is covalently cross-linked (Glycyl lysine isopeptide (Lys-Gly) (interchain with G-Cter in ubiquitin)). Residues Ser700 and Ser712 each carry the phosphoserine modification. Thr717 bears the Phosphothreonine mark. 6 positions are modified to phosphoserine: Ser737, Ser753, Ser768, Ser790, Ser795, and Ser813. The helical transmembrane segment at 859–879 (LIFVLIWCLVIFLAEVAASLV) threads the bilayer. Residues 859 to 1155 (LIFVLIWCLV…AVNSSIDVDS (297 aa)) form the ABC transmembrane type-1 2 domain. Topologically, residues 880-918 (VLWFLGNTPFQDKGNSTYSRNNSYAVIITNTSSYYVFYI) are extracellular. 3 N-linked (GlcNAc...) asparagine glycosylation sites follow: Asn894, Asn900, and Asn909. Residues 919–939 (YVGVADTLLALGFFRGLPLVH) form a discontinuously helical membrane-spanning segment. The Cytoplasmic segment spans residues 940–990 (TLITVSKILHHKMLHSVLQAPMSTLNTLKAGGILNRFSKDIAILDDLLPLT). A helical membrane pass occupies residues 991-1011 (IFDFIQLLLIVIGAIAVVSVL). The Extracellular portion of the chain corresponds to 1012 to 1013 (QP). A helical membrane pass occupies residues 1014 to 1034 (YILLATVPVIAAFILLRAYFL). Residues 1035–1095 (QTSQQLKQLE…TANWFLYLAT (61 aa)) lie on the Cytoplasmic side of the membrane. Residues 1096-1116 (LRWFQMRIEIIFVIFFIAVTF) form a helical membrane-spanning segment. Residues 1117-1130 (ISILTTGEGEGTVG) are Extracellular-facing. Residues 1131–1151 (IILTLAMNIMSTLQWAVNSSI) form a helical membrane-spanning segment. Residues 1152–1480 (DVDSLMRSVS…TEEEVQETRL (329 aa)) lie on the Cytoplasmic side of the membrane. In terms of domain architecture, ABC transporter 2 spans 1210–1443 (MTIKDLTAKY…KSLFQQAISH (234 aa)). ATP-binding positions include Tyr1219 and 1244–1251 (GRTGSGKS). Residues 1386–1480 (RALKQAFADC…TEEEVQETRL (95 aa)) are interaction with GORASP2. Cys1395 carries the S-palmitoyl cysteine lipid modification. Ser1444 and Ser1456 each carry phosphoserine. The segment at 1452–1480 (HRNSSKYKSPPQIASLKEETEEEVQETRL) is disordered. The segment covering 1470–1480 (ETEEEVQETRL) has biased composition (acidic residues). A PDZ-binding motif is present at residues 1478 to 1480 (TRL).

Belongs to the ABC transporter superfamily. ABCC family. CFTR transporter (TC 3.A.1.202) subfamily. As to quaternary structure, monomer; does not require oligomerization for channel activity. May form oligomers in the membrane. Interacts with SLC26A3, SLC26A6 and NHERF1. Interacts with SHANK2. Interacts with MYO6. Interacts (via C-terminus) with GOPC (via PDZ domain); this promotes CFTR internalization and thereby decreases channel activity. Interacts with SLC4A7 through NHERF1. Found in a complex with MYO5B and RAB11A. Interacts with ANO1. Interacts with SLC26A8. Interacts with AHCYL1; the interaction increases CFTR activity. Interacts with CSE1L. The core-glycosylated form interacts with GORASP2 (via PDZ GRASP-type 1 domain) in respone to ER stress. Interacts with MARCHF2; the interaction leads to CFTR ubiqtuitination and degradation. Interacts with ADGRG2. In terms of processing, N-glycosylated. Post-translationally, phosphorylated; cAMP treatment promotes phosphorylation and activates the channel. Dephosphorylation decreases the ATPase activity (in vitro). Phosphorylation at PKA sites activates the channel. Phosphorylation at PKC sites enhances the response to phosphorylation by PKA. Phosphorylated by AMPK; this inhibits channel activity. Ubiquitinated, leading to its degradation in the lysosome. Deubiquitination by USP10 in early endosomes enhances its endocytic recycling to the cell membrane. Ubiquitinated by RNF185 during ER stress. Ubiquitinated by MARCHF2.

It is found in the apical cell membrane. It localises to the early endosome membrane. The protein localises to the cell membrane. The protein resides in the recycling endosome membrane. Its subcellular location is the endoplasmic reticulum membrane. It is found in the nucleus. The catalysed reaction is ATP + H2O + closed Cl(-) channel = ADP + phosphate + open Cl(-) channel.. The enzyme catalyses chloride(in) = chloride(out). It catalyses the reaction hydrogencarbonate(in) = hydrogencarbonate(out). It carries out the reaction ATP + H2O = ADP + phosphate + H(+). Its function is as follows. Epithelial ion channel that plays an important role in the regulation of epithelial ion and water transport and fluid homeostasis. Mediates the transport of chloride ions across the cell membrane. Possesses an intrinsic ATPase activity and utilizes ATP to gate its channel; the passive flow of anions through the channel is gated by cycles of ATP binding and hydrolysis by the ATP-binding domains. The ion channel is also permeable to HCO(3)(-); selectivity depends on the extracellular chloride concentration. Exerts its function also by modulating the activity of other ion channels and transporters. Contributes to the regulation of the pH and the ion content of the epithelial fluid layer. Modulates the activity of the epithelial sodium channel (ENaC) complex, in part by regulating the cell surface expression of the ENaC complex. May regulate bicarbonate secretion and salvage in epithelial cells by regulating the transporter SLC4A7. Can inhibit the chloride channel activity of ANO1. Plays a role in the chloride and bicarbonate homeostasis during sperm epididymal maturation and capacitation. The polypeptide is Cystic fibrosis transmembrane conductance regulator (Ateles geoffroyi (Black-handed spider monkey)).